We begin with the raw amino-acid sequence, 221 residues long: Uracil-DNA glycosylase 1 (221 aa).

D61 acts as the Proton acceptor in catalysis.

The protein belongs to the uracil-DNA glycosylase (UDG) superfamily. UNG family.

It is found in the cytoplasm. The enzyme catalyses Hydrolyzes single-stranded DNA or mismatched double-stranded DNA and polynucleotides, releasing free uracil.. Excises uracil residues from the DNA which can arise as a result of misincorporation of dUMP residues by DNA polymerase or due to deamination of cytosine. The protein is Uracil-DNA glycosylase 1 of Listeria innocua serovar 6a (strain ATCC BAA-680 / CLIP 11262).